Consider the following 456-residue polypeptide: Methylenetetrahydrofolate--tRNA-(uracil-5-)-methyltransferase TrmFO (456 aa).

12 to 17 (GGGLAG) lines the FAD pocket.

The protein belongs to the MnmG family. TrmFO subfamily. It depends on FAD as a cofactor.

Its subcellular location is the cytoplasm. It carries out the reaction uridine(54) in tRNA + (6R)-5,10-methylene-5,6,7,8-tetrahydrofolate + NADH + H(+) = 5-methyluridine(54) in tRNA + (6S)-5,6,7,8-tetrahydrofolate + NAD(+). The catalysed reaction is uridine(54) in tRNA + (6R)-5,10-methylene-5,6,7,8-tetrahydrofolate + NADPH + H(+) = 5-methyluridine(54) in tRNA + (6S)-5,6,7,8-tetrahydrofolate + NADP(+). Functionally, catalyzes the folate-dependent formation of 5-methyl-uridine at position 54 (M-5-U54) in all tRNAs. The protein is Methylenetetrahydrofolate--tRNA-(uracil-5-)-methyltransferase TrmFO of Picosynechococcus sp. (strain ATCC 27264 / PCC 7002 / PR-6) (Agmenellum quadruplicatum).